A 224-amino-acid polypeptide reads, in one-letter code: Heme response regulator HssR (224 aa).

The Response regulatory domain maps to 3–116 (QCLVVDDDSR…ELIFRIRAVL (114 aa)). The residue at position 52 (Asp-52) is a 4-aspartylphosphate. The ompR/PhoB-type DNA-binding region spans 124–222 (NSEMTIGNLT…VRGQGYKVEN (99 aa)).

Post-translationally, phosphorylated by HssS.

It localises to the cytoplasm. Member of the two-component regulatory system HssS/HssR involved in intracellular heme homeostasis and tempering of staphylococcal virulence. Phosphorylated HssR binds to a direct repeat sequence within hrtAB promoter and activates the expression of hrtAB, an efflux pump, in response to extracellular heme, hemin, hemoglobin or blood. This is Heme response regulator HssR (hssR) from Staphylococcus aureus (strain bovine RF122 / ET3-1).